Reading from the N-terminus, the 502-residue chain is MSQEKYIMAIDQGTTSSRAIIFNKKGEKVSSSQKEFTQIFPQAGWVEHNANEIWNSVQSVIAGAFIESGVKPNQIEAIGITNQRETTVVWDKNTGLPIYNAIVWQSRQTAPLAEQLKSQGYVEKFHEKTGLIIDAYFSATKVRWILDHVEGAQERAEKGELLFGTIDTWLVWKLTDGAAHVTDYSNAARTMLYNIKELKWDDEILEILNIPKAMLPEVRSNSEIYGKTAPFHFYGGEVPISGMAGDQQAALFGQLAFEPGMVKNTYGTGSFIIMNTGEEMQLSENNLLTTIGYGINGKVYYALEGSIFIAGSAIQWLRDGLRMVENSPESEKYALNSHNNDEVYVVPAFTGLGAPYWDQNARGSVFGLTRGTSKEDFIKATLQSIAYQVRDIIDTMQVDAKTAIQVLKVDGGAAMNNFLMQFQADILGIDIARAKNLETTALGAAFLAGLSVGYWKDLDELRTLNETGELFEPSMNESRKEQLYKGWKKAVKATQVFAEIDD.

Residue Thr14 coordinates ADP. The ATP site is built by Thr14, Thr15, and Ser16. Thr14 is a binding site for sn-glycerol 3-phosphate. Residue Arg18 coordinates ADP. Arg84, Glu85, and Tyr136 together coordinate sn-glycerol 3-phosphate. Residues Arg84, Glu85, and Tyr136 each contribute to the glycerol site. Residue His232 is modified to Phosphohistidine; by HPr. Asp246 is a binding site for sn-glycerol 3-phosphate. 2 residues coordinate glycerol: Asp246 and Gln247. ADP contacts are provided by Thr268 and Gly311. The ATP site is built by Thr268, Gly311, Gln315, and Gly412. Positions 412 and 416 each coordinate ADP.

It belongs to the FGGY kinase family. In terms of assembly, homotetramer and homodimer (in equilibrium). The phosphoenolpyruvate-dependent sugar phosphotransferase system (PTS), including enzyme I, and histidine-containing protein (HPr) are required for the phosphorylation, which leads to the activation of the enzyme.

The enzyme catalyses glycerol + ATP = sn-glycerol 3-phosphate + ADP + H(+). It participates in polyol metabolism; glycerol degradation via glycerol kinase pathway; sn-glycerol 3-phosphate from glycerol: step 1/1. With respect to regulation, activated by phosphorylation and inhibited by fructose 1,6-bisphosphate (FBP). Functionally, key enzyme in the regulation of glycerol uptake and metabolism. Catalyzes the phosphorylation of glycerol to yield sn-glycerol 3-phosphate. The chain is Glycerol kinase from Streptococcus gordonii (strain Challis / ATCC 35105 / BCRC 15272 / CH1 / DL1 / V288).